The chain runs to 100 residues: Large ribosomal subunit protein uL23 (100 aa).

It belongs to the universal ribosomal protein uL23 family. In terms of assembly, part of the 50S ribosomal subunit. Contacts protein L29, and trigger factor when it is bound to the ribosome.

Functionally, one of the early assembly proteins it binds 23S rRNA. One of the proteins that surrounds the polypeptide exit tunnel on the outside of the ribosome. Forms the main docking site for trigger factor binding to the ribosome. This Idiomarina loihiensis (strain ATCC BAA-735 / DSM 15497 / L2-TR) protein is Large ribosomal subunit protein uL23.